A 124-amino-acid polypeptide reads, in one-letter code: Holo-[acyl-carrier-protein] synthase (124 aa).

Residues aspartate 8 and glutamate 56 each coordinate Mg(2+).

This sequence belongs to the P-Pant transferase superfamily. AcpS family. Mg(2+) serves as cofactor.

Its subcellular location is the cytoplasm. It carries out the reaction apo-[ACP] + CoA = holo-[ACP] + adenosine 3',5'-bisphosphate + H(+). Its function is as follows. Transfers the 4'-phosphopantetheine moiety from coenzyme A to a Ser of acyl-carrier-protein. The polypeptide is Holo-[acyl-carrier-protein] synthase (Nitratidesulfovibrio vulgaris (strain DP4) (Desulfovibrio vulgaris)).